The following is a 129-amino-acid chain: Follitropin subunit beta (129 aa).

The signal sequence occupies residues 1–18 (MKSIQFCFFFCCWKAICC). Disulfide bonds link Cys21–Cys69, Cys35–Cys84, Cys38–Cys122, Cys46–Cys100, Cys50–Cys102, and Cys105–Cys112. N-linked (GlcNAc...) asparagine glycosylation is found at Asn25 and Asn42.

The protein belongs to the glycoprotein hormones subunit beta family. In terms of assembly, heterodimer. The active follitropin is a heterodimer composed of an alpha chain/CGA shared with other hormones and a unique beta chain/FSHB shown here.

Its subcellular location is the secreted. Functionally, together with the alpha chain CGA constitutes follitropin, the follicle-stimulating hormone, and provides its biological specificity to the hormone heterodimer. Binds FSHR, a G protein-coupled receptor, on target cells to activate downstream signaling pathways. Follitropin is involved in follicle development and spermatogenesis in reproductive organs. In Cavia porcellus (Guinea pig), this protein is Follitropin subunit beta (FSHB).